The chain runs to 428 residues: Transcription factor bHLH91 (428 aa).

The 50-residue stretch at 210-259 (KRKNKPFTTERERRCHLNERYEALKLLIPSPSKGDRASILQDGIDYINEL) folds into the bHLH domain. Positions 278–320 (RHKNNEVDDNNNNKNLDDHGNEDDDDDDENMEKKPESDVIDQC) are disordered. Over residues 297 to 307 (GNEDDDDDDEN) the composition is skewed to acidic residues.

Homodimer. In terms of tissue distribution, flowers.

The protein resides in the nucleus. This chain is Transcription factor bHLH91 (BHLH91), found in Arabidopsis thaliana (Mouse-ear cress).